A 159-amino-acid chain; its full sequence is Ribosomal RNA large subunit methyltransferase H (159 aa).

Residues Leu-76, Gly-108, and 127–132 (FGLLTL) each bind S-adenosyl-L-methionine.

Belongs to the RNA methyltransferase RlmH family. Homodimer.

It is found in the cytoplasm. The enzyme catalyses pseudouridine(1915) in 23S rRNA + S-adenosyl-L-methionine = N(3)-methylpseudouridine(1915) in 23S rRNA + S-adenosyl-L-homocysteine + H(+). Functionally, specifically methylates the pseudouridine at position 1915 (m3Psi1915) in 23S rRNA. The chain is Ribosomal RNA large subunit methyltransferase H from Streptococcus mutans serotype c (strain ATCC 700610 / UA159).